Consider the following 363-residue polypeptide: Protein RecA (363 aa).

Gly-79–Thr-86 is an ATP binding site.

This sequence belongs to the RecA family.

It is found in the cytoplasm. Can catalyze the hydrolysis of ATP in the presence of single-stranded DNA, the ATP-dependent uptake of single-stranded DNA by duplex DNA, and the ATP-dependent hybridization of homologous single-stranded DNAs. It interacts with LexA causing its activation and leading to its autocatalytic cleavage. This is Protein RecA from Borrelia turicatae (strain 91E135).